Consider the following 270-residue polypeptide: Formamidopyrimidine-DNA glycosylase (270 aa).

P2 acts as the Schiff-base intermediate with DNA in catalysis. Residue E3 is the Proton donor of the active site. K58 functions as the Proton donor; for beta-elimination activity in the catalytic mechanism. DNA-binding residues include H91, R110, and R151. Residues 236 to 270 (FVYGRGGEFCKVCGSTLREIRLGQRASVYCPRCQR) form an FPG-type zinc finger. Catalysis depends on R260, which acts as the Proton donor; for delta-elimination activity.

The protein belongs to the FPG family. As to quaternary structure, monomer. The cofactor is Zn(2+).

It carries out the reaction Hydrolysis of DNA containing ring-opened 7-methylguanine residues, releasing 2,6-diamino-4-hydroxy-5-(N-methyl)formamidopyrimidine.. The enzyme catalyses 2'-deoxyribonucleotide-(2'-deoxyribose 5'-phosphate)-2'-deoxyribonucleotide-DNA = a 3'-end 2'-deoxyribonucleotide-(2,3-dehydro-2,3-deoxyribose 5'-phosphate)-DNA + a 5'-end 5'-phospho-2'-deoxyribonucleoside-DNA + H(+). In terms of biological role, involved in base excision repair of DNA damaged by oxidation or by mutagenic agents. Acts as a DNA glycosylase that recognizes and removes damaged bases. Has a preference for oxidized purines, such as 7,8-dihydro-8-oxoguanine (8-oxoG). Has AP (apurinic/apyrimidinic) lyase activity and introduces nicks in the DNA strand. Cleaves the DNA backbone by beta-delta elimination to generate a single-strand break at the site of the removed base with both 3'- and 5'-phosphates. This Pseudomonas aeruginosa (strain LESB58) protein is Formamidopyrimidine-DNA glycosylase.